Reading from the N-terminus, the 419-residue chain is Zinc finger CCCH domain-containing protein 62 (419 aa).

The C3H1-type zinc-finger motif lies at 89–116; sequence SLRKWVCKYWKDGKCKRGEQCQFLHSWS. 5 WD repeats span residues 129 to 168, 210 to 247, 256 to 293, 296 to 335, and 383 to 419; these read GHNK…CVHS, GVVG…ESDP, GHSG…CIMT, QHTG…KVVQ, and FSTH…GNKV.

This Arabidopsis thaliana (Mouse-ear cress) protein is Zinc finger CCCH domain-containing protein 62 (ZFWD4).